Consider the following 392-residue polypeptide: Succinate--CoA ligase [ADP-forming] subunit beta (392 aa).

Positions Lys9 to Lys236 constitute an ATP-grasp domain. Residues Lys45, Gly52–Gly54, Val94, and Glu99 each bind ATP. Asn191 and Asp205 together coordinate Mg(2+). Substrate contacts are provided by residues Asn256 and Gly318–Thr320.

This sequence belongs to the succinate/malate CoA ligase beta subunit family. In terms of assembly, heterotetramer of two alpha and two beta subunits. Mg(2+) is required as a cofactor.

It carries out the reaction succinate + ATP + CoA = succinyl-CoA + ADP + phosphate. It catalyses the reaction GTP + succinate + CoA = succinyl-CoA + GDP + phosphate. The protein operates within carbohydrate metabolism; tricarboxylic acid cycle; succinate from succinyl-CoA (ligase route): step 1/1. In terms of biological role, succinyl-CoA synthetase functions in the citric acid cycle (TCA), coupling the hydrolysis of succinyl-CoA to the synthesis of either ATP or GTP and thus represents the only step of substrate-level phosphorylation in the TCA. The beta subunit provides nucleotide specificity of the enzyme and binds the substrate succinate, while the binding sites for coenzyme A and phosphate are found in the alpha subunit. This is Succinate--CoA ligase [ADP-forming] subunit beta from Acidothermus cellulolyticus (strain ATCC 43068 / DSM 8971 / 11B).